Here is a 299-residue protein sequence, read N- to C-terminus: GTPase Era (299 aa).

The 168-residue stretch at 5–172 (KSGFVSIIGR…IDVLKTYLPE (168 aa)) folds into the Era-type G domain. The segment at 13–20 (GRPNVGKS) is G1. Residue 13–20 (GRPNVGKS) coordinates GTP. Residues 39 to 43 (QTTRN) form a G2 region. The tract at residues 60–63 (DTPG) is G3. Residues 60-64 (DTPGI) and 122-125 (NKID) contribute to the GTP site. A G4 region spans residues 122–125 (NKID). The segment at 151–153 (ISA) is G5. The KH type-2 domain occupies 203 to 280 (TSEEIPHAIG…YLELWVKVQR (78 aa)).

Belongs to the TRAFAC class TrmE-Era-EngA-EngB-Septin-like GTPase superfamily. Era GTPase family. In terms of assembly, monomer.

It is found in the cytoplasm. Its subcellular location is the cell membrane. Functionally, an essential GTPase that binds both GDP and GTP, with rapid nucleotide exchange. Plays a role in 16S rRNA processing and 30S ribosomal subunit biogenesis and possibly also in cell cycle regulation and energy metabolism. The chain is GTPase Era from Staphylococcus aureus (strain Mu3 / ATCC 700698).